Reading from the N-terminus, the 187-residue chain is Probable chemoreceptor glutamine deamidase CheD 1 (187 aa).

This sequence belongs to the CheD family.

It carries out the reaction L-glutaminyl-[protein] + H2O = L-glutamyl-[protein] + NH4(+). Functionally, probably deamidates glutamine residues to glutamate on methyl-accepting chemotaxis receptors (MCPs), playing an important role in chemotaxis. The chain is Probable chemoreceptor glutamine deamidase CheD 1 from Ruegeria sp. (strain TM1040) (Silicibacter sp.).